Reading from the N-terminus, the 282-residue chain is tRNA pseudouridine synthase B (282 aa).

Aspartate 39 serves as the catalytic Nucleophile.

Belongs to the pseudouridine synthase TruB family. Type 1 subfamily.

It catalyses the reaction uridine(55) in tRNA = pseudouridine(55) in tRNA. Responsible for synthesis of pseudouridine from uracil-55 in the psi GC loop of transfer RNAs. The chain is tRNA pseudouridine synthase B from Borrelia garinii subsp. bavariensis (strain ATCC BAA-2496 / DSM 23469 / PBi) (Borreliella bavariensis).